The chain runs to 103 residues: Defensin-like protein 268 (103 aa).

A signal peptide spans 1–24 (MARLIFHFVFALILAAYLLSVTDA). Disulfide bonds link Cys44–Cys103, Cys68–Cys87, Cys74–Cys98, and Cys78–Cys100.

It belongs to the DEFL family.

The protein resides in the secreted. This Arabidopsis thaliana (Mouse-ear cress) protein is Defensin-like protein 268.